Reading from the N-terminus, the 308-residue chain is Porphobilinogen deaminase (308 aa).

C241 carries the post-translational modification S-(dipyrrolylmethanemethyl)cysteine.

It belongs to the HMBS family. Monomer. The cofactor is dipyrromethane.

It catalyses the reaction 4 porphobilinogen + H2O = hydroxymethylbilane + 4 NH4(+). It functions in the pathway porphyrin-containing compound metabolism; protoporphyrin-IX biosynthesis; coproporphyrinogen-III from 5-aminolevulinate: step 2/4. In terms of biological role, tetrapolymerization of the monopyrrole PBG into the hydroxymethylbilane pre-uroporphyrinogen in several discrete steps. In Exiguobacterium sibiricum (strain DSM 17290 / CCUG 55495 / CIP 109462 / JCM 13490 / 255-15), this protein is Porphobilinogen deaminase.